The following is a 349-amino-acid chain: Phosphoribosylformylglycinamidine cyclo-ligase (349 aa).

Belongs to the AIR synthase family.

Its subcellular location is the cytoplasm. The enzyme catalyses 2-formamido-N(1)-(5-O-phospho-beta-D-ribosyl)acetamidine + ATP = 5-amino-1-(5-phospho-beta-D-ribosyl)imidazole + ADP + phosphate + H(+). Its pathway is purine metabolism; IMP biosynthesis via de novo pathway; 5-amino-1-(5-phospho-D-ribosyl)imidazole from N(2)-formyl-N(1)-(5-phospho-D-ribosyl)glycinamide: step 2/2. The sequence is that of Phosphoribosylformylglycinamidine cyclo-ligase from Bordetella avium (strain 197N).